The sequence spans 508 residues: Lysine--tRNA ligase (508 aa).

Mg(2+)-binding residues include Glu-403 and Glu-410.

The protein belongs to the class-II aminoacyl-tRNA synthetase family. Homodimer. It depends on Mg(2+) as a cofactor.

It is found in the cytoplasm. The catalysed reaction is tRNA(Lys) + L-lysine + ATP = L-lysyl-tRNA(Lys) + AMP + diphosphate. The chain is Lysine--tRNA ligase from Methanoculleus marisnigri (strain ATCC 35101 / DSM 1498 / JR1).